An 83-amino-acid polypeptide reads, in one-letter code: Kunitz-type serine protease inhibitor A (83 aa).

The signal sequence occupies residues 1–24; that stretch reads MSSGGLLLLLGLLTLCAELTPVSS. Residues 31-81 enclose the BPTI/Kunitz inhibitor domain; it reads CNVPPEPGRCNANVRAFYYNPRLRKCIEFTYGGCGGNANNFKSRGECKRTC. Disulfide bonds link C31-C81, C40-C64, and C56-C77.

The protein belongs to the venom Kunitz-type family. In terms of tissue distribution, expressed by the venom gland.

The protein localises to the secreted. Serine protease inhibitor. The chain is Kunitz-type serine protease inhibitor A from Bungarus candidus (Malayan krait).